Reading from the N-terminus, the 180-residue chain is ATP synthase subunit delta (180 aa).

It belongs to the ATPase delta chain family. As to quaternary structure, F-type ATPases have 2 components, F(1) - the catalytic core - and F(0) - the membrane proton channel. F(1) has five subunits: alpha(3), beta(3), gamma(1), delta(1), epsilon(1). F(0) has three main subunits: a(1), b(2) and c(10-14). The alpha and beta chains form an alternating ring which encloses part of the gamma chain. F(1) is attached to F(0) by a central stalk formed by the gamma and epsilon chains, while a peripheral stalk is formed by the delta and b chains.

The protein resides in the cell membrane. In terms of biological role, f(1)F(0) ATP synthase produces ATP from ADP in the presence of a proton or sodium gradient. F-type ATPases consist of two structural domains, F(1) containing the extramembraneous catalytic core and F(0) containing the membrane proton channel, linked together by a central stalk and a peripheral stalk. During catalysis, ATP synthesis in the catalytic domain of F(1) is coupled via a rotary mechanism of the central stalk subunits to proton translocation. This protein is part of the stalk that links CF(0) to CF(1). It either transmits conformational changes from CF(0) to CF(1) or is implicated in proton conduction. The sequence is that of ATP synthase subunit delta from Dehalococcoides mccartyi (strain ATCC BAA-2266 / KCTC 15142 / 195) (Dehalococcoides ethenogenes (strain 195)).